The primary structure comprises 568 residues: Kelch-like protein 12 (568 aa).

A BTB domain is found at 33–100 (CDVTLRVEQK…VYTETVHVTV (68 aa)). In terms of domain architecture, BACK spans 135 to 236 (CLGIRDFAET…LTPRYITDVI (102 aa)). Kelch repeat units follow at residues 282-329 (VLLV…SLHD), 331-379 (IYVI…TLGD), 380-426 (MIYV…VASG), 427-473 (VIYC…LLND), 475-520 (IYVV…VLRG), and 522-567 (LYAI…VLRE). Residues 405–568 (QWSMLGDMQT…DAGVCVLREK (164 aa)) form an interaction with DVL3 region.

As to quaternary structure, component of the BCR(KLHL12) E3 ubiquitin ligase complex, at least composed of CUL3 and KLHL12 and RBX1. This complex interacts with DVL3 upon activation of the Wnt signaling pathway by WNT3A. Interacts with DRD4, KLHL2 and SEC31A. Interacts with PEF1 and PDCD6/ALG-2; interaction takes place in response to cytosolic calcium increase and leads to bridge together the BCR(KLHL12) complex and SEC31 (SEC31A or SEC31B). Ubiquitinated by the SCF(FBXL17) complex, leading to its degradation by the proteasome: ubiquitination by the SCF(FBXL17) complex takes place when aberrant BTB domain dimers are formed. Ubiquitously expressed. Highly expressed in testis and at lower levels in the submandibular salivary gland.

The protein localises to the cytoplasmic vesicle. It is found in the COPII-coated vesicle. It functions in the pathway protein modification; protein ubiquitination. In terms of biological role, substrate-specific adapter of a BCR (BTB-CUL3-RBX1) E3 ubiquitin ligase complex that acts as a negative regulator of Wnt signaling pathway and ER-Golgi transport. The BCR(KLHL12) complex is involved in ER-Golgi transport by regulating the size of COPII coats, thereby playing a key role in collagen export, which is required for embryonic stem (ES) cells division: BCR(KLHL12) acts by mediating monoubiquitination of SEC31 (SEC31A or SEC31B). The BCR(KLHL12) complex is also involved in neural crest specification: in response to cytosolic calcium increase, interacts with the heterodimer formed with PEF1 and PDCD6/ALG-2, leading to bridge together the BCR(KLHL12) complex and SEC31 (SEC31A or SEC31B), promoting monoubiquitination of SEC31 and subsequent collagen export. As part of the BCR(KLHL12) complex, also acts as a negative regulator of the Wnt signaling pathway by mediating ubiquitination and subsequent proteolysis of DVL3. The BCR(KLHL12) complex also mediates polyubiquitination of DRD4 and PEF1, without leading to degradation of these proteins. In Homo sapiens (Human), this protein is Kelch-like protein 12 (KLHL12).